Here is a 427-residue protein sequence, read N- to C-terminus: MAP kinase-interacting serine/threonine-protein kinase 1 (427 aa).

Over residues 1–11 the composition is skewed to basic and acidic residues; that stretch reads MVSSQKLEKPI. The disordered stretch occupies residues 1 to 37; that stretch reads MVSSQKLEKPIEMGSSEPLPIVDSDKRRKKKRKTRAT. A Phosphothreonine; by PAK2 modification is found at Thr34. Phosphoserine; by PAK2 is present on Ser39. The Protein kinase domain occupies 49–333; it reads QLTSELLGEG…AAQVLQHPWV (285 aa). ATP contacts are provided by residues 55–63 and Lys78; that span reads LGEGAYAKV. Catalysis depends on Asp170, which acts as the Proton acceptor. Phosphoserine occurs at positions 180 and 185. A phosphothreonine mark is found at Thr209, Thr214, and Thr344. The tract at residues 407-427 is disordered; sequence RALAQAGRSRDANPCLTPAGL.

Belongs to the protein kinase superfamily. CAMK Ser/Thr protein kinase family. In terms of assembly, interacts with the C-terminal regions of EIF4G1 and EIF4G2. Also binds to dephosphorylated ERK1 and ERK2, and to the p38 kinases. Requires Mg(2+) as cofactor. Post-translationally, dual phosphorylation of Thr-209 and Thr-214 activates the kinase. Phosphorylation of Thr-344 activates the kinase. MAPK3/ERK1 is one of the kinases which activate MKNK1/MNK1. Phosphorylation by PAK2 leads to a reduced phosphorylation of EIF4G1. Ubiquitously expressed in all tissues examined, with high levels in skeletal muscle.

The catalysed reaction is L-seryl-[protein] + ATP = O-phospho-L-seryl-[protein] + ADP + H(+). It carries out the reaction L-threonyl-[protein] + ATP = O-phospho-L-threonyl-[protein] + ADP + H(+). With respect to regulation, phosphorylated and activated by the p38 kinases and kinases in the Erk pathway. In terms of biological role, may play a role in the response to environmental stress and cytokines. Appears to regulate translation by phosphorylating EIF4E, thus increasing the affinity of this protein for the 7-methylguanosine-containing mRNA cap. In Mus musculus (Mouse), this protein is MAP kinase-interacting serine/threonine-protein kinase 1 (Mknk1).